Consider the following 448-residue polypeptide: Extracellular serine protease (448 aa).

Residues 1 to 20 (MKLSHLSLAIISAITLAACG) form the signal peptide. The disordered stretch occupies residues 87–109 (KELENQASDDEVDPTKTGVVGNL).

This sequence belongs to the peptidase S17 family. A divalent metal cation serves as cofactor.

This enzyme is a chymotrypsin-like serine protease. Degrades a variety of substrates present in the skin and hoof of the sheep, including elastin, keratin, fibrinogen and collagen. It seems to play an important role in the pathogenesis of sheep footrot. The chain is Extracellular serine protease (prvA) from Dichelobacter nodosus (Bacteroides nodosus).